We begin with the raw amino-acid sequence, 481 residues long: ATP synthase subunit beta (481 aa).

160–167 (GGAGVGKT) is an ATP binding site.

This sequence belongs to the ATPase alpha/beta chains family. F-type ATPases have 2 components, CF(1) - the catalytic core - and CF(0) - the membrane proton channel. CF(1) has five subunits: alpha(3), beta(3), gamma(1), delta(1), epsilon(1). CF(0) has three main subunits: a(1), b(2) and c(9-12). The alpha and beta chains form an alternating ring which encloses part of the gamma chain. CF(1) is attached to CF(0) by a central stalk formed by the gamma and epsilon chains, while a peripheral stalk is formed by the delta and b chains.

The protein localises to the cell inner membrane. The enzyme catalyses ATP + H2O + 4 H(+)(in) = ADP + phosphate + 5 H(+)(out). Its function is as follows. Produces ATP from ADP in the presence of a proton gradient across the membrane. The catalytic sites are hosted primarily by the beta subunits. This Anaeromyxobacter sp. (strain Fw109-5) protein is ATP synthase subunit beta.